Consider the following 339-residue polypeptide: Biotin synthase (339 aa).

The Radical SAM core domain maps to N55–R282. [4Fe-4S] cluster contacts are provided by C70, C74, and C77. Positions 114, 145, 205, and 277 each coordinate [2Fe-2S] cluster.

Belongs to the radical SAM superfamily. Biotin synthase family. As to quaternary structure, homodimer. Requires [4Fe-4S] cluster as cofactor. The cofactor is [2Fe-2S] cluster.

It catalyses the reaction (4R,5S)-dethiobiotin + (sulfur carrier)-SH + 2 reduced [2Fe-2S]-[ferredoxin] + 2 S-adenosyl-L-methionine = (sulfur carrier)-H + biotin + 2 5'-deoxyadenosine + 2 L-methionine + 2 oxidized [2Fe-2S]-[ferredoxin]. The protein operates within cofactor biosynthesis; biotin biosynthesis; biotin from 7,8-diaminononanoate: step 2/2. In terms of biological role, catalyzes the conversion of dethiobiotin (DTB) to biotin by the insertion of a sulfur atom into dethiobiotin via a radical-based mechanism. In Burkholderia orbicola (strain MC0-3), this protein is Biotin synthase.